Here is a 360-residue protein sequence, read N- to C-terminus: Phospho-N-acetylmuramoyl-pentapeptide-transferase (360 aa).

The next 10 membrane-spanning stretches (helical) occupy residues Y21–G41, T73–L93, T94–V114, W132–G152, V168–S188, G199–T219, L239–Y259, V263–L283, F288–V308, and V338–K358.

Belongs to the glycosyltransferase 4 family. MraY subfamily. Mg(2+) is required as a cofactor.

It is found in the cell inner membrane. It carries out the reaction UDP-N-acetyl-alpha-D-muramoyl-L-alanyl-gamma-D-glutamyl-meso-2,6-diaminopimeloyl-D-alanyl-D-alanine + di-trans,octa-cis-undecaprenyl phosphate = di-trans,octa-cis-undecaprenyl diphospho-N-acetyl-alpha-D-muramoyl-L-alanyl-D-glutamyl-meso-2,6-diaminopimeloyl-D-alanyl-D-alanine + UMP. It participates in cell wall biogenesis; peptidoglycan biosynthesis. Functionally, catalyzes the initial step of the lipid cycle reactions in the biosynthesis of the cell wall peptidoglycan: transfers peptidoglycan precursor phospho-MurNAc-pentapeptide from UDP-MurNAc-pentapeptide onto the lipid carrier undecaprenyl phosphate, yielding undecaprenyl-pyrophosphoryl-MurNAc-pentapeptide, known as lipid I. This Vibrio cholerae serotype O1 (strain M66-2) protein is Phospho-N-acetylmuramoyl-pentapeptide-transferase.